The primary structure comprises 161 residues: Crossover junction endodeoxyribonuclease RuvC (161 aa).

Residues Asp7, Glu67, and Asp140 contribute to the active site. Mg(2+) is bound by residues Asp7, Glu67, and Asp140.

This sequence belongs to the RuvC family. Homodimer which binds Holliday junction (HJ) DNA. The HJ becomes 2-fold symmetrical on binding to RuvC with unstacked arms; it has a different conformation from HJ DNA in complex with RuvA. In the full resolvosome a probable DNA-RuvA(4)-RuvB(12)-RuvC(2) complex forms which resolves the HJ. Requires Mg(2+) as cofactor.

Its subcellular location is the cytoplasm. It carries out the reaction Endonucleolytic cleavage at a junction such as a reciprocal single-stranded crossover between two homologous DNA duplexes (Holliday junction).. In terms of biological role, the RuvA-RuvB-RuvC complex processes Holliday junction (HJ) DNA during genetic recombination and DNA repair. Endonuclease that resolves HJ intermediates. Cleaves cruciform DNA by making single-stranded nicks across the HJ at symmetrical positions within the homologous arms, yielding a 5'-phosphate and a 3'-hydroxyl group; requires a central core of homology in the junction. The consensus cleavage sequence is 5'-(A/T)TT(C/G)-3'. Cleavage occurs on the 3'-side of the TT dinucleotide at the point of strand exchange. HJ branch migration catalyzed by RuvA-RuvB allows RuvC to scan DNA until it finds its consensus sequence, where it cleaves and resolves the cruciform DNA. This chain is Crossover junction endodeoxyribonuclease RuvC, found in Natranaerobius thermophilus (strain ATCC BAA-1301 / DSM 18059 / JW/NM-WN-LF).